A 67-amino-acid chain; its full sequence is Bombesin (67 aa).

An N-terminal signal peptide occupies residues 1–30 (MSLLPAVKVLPLGYLGIVLVFSLILRSAMV). Residues 31–49 (DFIQDAGKLERIDTYKREA) constitute a propeptide that is removed on maturation. Glutamine 50 is subject to Pyrrolidone carboxylic acid. Methionine 64 carries the methionine amide modification.

Belongs to the bombesin/neuromedin-B/ranatensin family. As to expression, expressed by the skin dorsal glands.

It localises to the secreted. In terms of biological role, stimulates smooth muscle contraction in isolated rat stomach strip. The chain is Bombesin from Sanguirana varians (Palawan frog).